Reading from the N-terminus, the 279-residue chain is Dehydrogenase/reductase SDR family member 4 (279 aa).

Position 37–61 (37–61 (LVTASTDGIGFAIARRLAQDGAHVV)) interacts with NADP(+). At Lys93 the chain carries N6-acetyllysine; alternate. Position 93 is an N6-succinyllysine; alternate (Lys93). Lys106 is modified (N6-acetyllysine). Ser170 serves as a coordination point for substrate. Tyr183 (proton acceptor) is an active-site residue. An NADP(+)-binding site is contributed by Lys187. The residue at position 221 (Ser221) is a Phosphoserine. N6-succinyllysine is present on Lys235. Residues 277–279 (SHL) carry the Peroxisomal targeting signal motif.

It belongs to the short-chain dehydrogenases/reductases (SDR) family. As to quaternary structure, homotetramer.

The protein resides in the peroxisome. The enzyme catalyses a secondary alcohol + NADP(+) = a ketone + NADPH + H(+). It carries out the reaction 3alpha-hydroxy-5beta-pregnan-20-one + NADP(+) = 5beta-pregnan-3,20-dione + NADPH + H(+). It catalyses the reaction 5beta-dihydrotestosterone + NADPH + H(+) = 5beta-androstane-3alpha,17beta-diol + NADP(+). The catalysed reaction is all-trans-retinol + NADP(+) = all-trans-retinal + NADPH + H(+). The enzyme catalyses isatin + NADPH + H(+) = 3-hydroxyindolin-2-one + NADP(+). In terms of biological role, NADPH-dependent oxidoreductase which catalyzes the reduction of a variety of compounds bearing carbonyl groups including ketosteroids, alpha-dicarbonyl compounds, aldehydes, aromatic ketones and quinones. Reduces all-trans-retinal and 9-cis retinal. Reduces 3-ketosteroids and benzil into 3alpha-hydroxysteroids and S-benzoin, respectively, in contrast to the stereoselectivity of primates DHRS4s which produce 3beta-hydroxysteroids and R-benzoin. In the reverse reaction, catalyzes the NADP-dependent oxidation of 3alpha-hydroxysteroids and alcohol, but with much lower efficiency. Involved in the metabolism of 3alpha-hydroxysteroids, retinoid, isatin and xenobiotic carbonyl compounds. The polypeptide is Dehydrogenase/reductase SDR family member 4 (DHRS4) (Bos taurus (Bovine)).